A 445-amino-acid polypeptide reads, in one-letter code: Zinc finger protein SHOOT GRAVITROPISM 5 (445 aa).

Positions 22–31 are enriched in low complexity; the sequence is SSSDPFLSSS. The segment at 22-59 is disordered; it reads SSSDPFLSSSENGVTTTNTSTQKRKRRPAGTPDPDAEV. The span at 32 to 42 shows a compositional bias: polar residues; the sequence is ENGVTTTNTST. C2H2-type zinc fingers lie at residues 73-95, 115-145, and 151-178; these read YICEICNQGFQRDQNLQMHRRRH, YVCPEPTCLHHNPCHALGDLVGIKKHFRRKH, and WVCERCSKGYAVQSDYKAHLKTCGTRGH. Zn(2+) is bound by residues cysteine 153, cysteine 156, histidine 169, cysteine 173, cysteine 180, cysteine 182, histidine 195, and cysteine 199. Residues 178-201 form a CCHC-type 2; atypical zinc finger; the sequence is HSCDCGRVFSRVESFIEHQDNCSA. Residues 188-200 are SHR-binding; sequence RVESFIEHQDNCS. Disordered stretches follow at residues 203-253 and 281-314; these read RVHR…LEGR and SSNQNPNQENQQQKVKEPSHHHNHNHDTTNLNLS. The span at 214 to 248 shows a compositional bias: polar residues; that stretch reads TAVTVPACSSRTASTVSTPSSETNYGGTVAVTTPQ. Residues 281–293 are compositionally biased toward low complexity; sequence SSNQNPNQENQQQ. A coiled-coil region spans residues 340–397; sequence MKIAMKEKAYAEEAKREAKRQREIAENEFANAKKIRQKAQAELERAKFLKEQSMKKIS.

Mainly expressed in the endodermis, the gravity-sensing tissue in inflorescence stems. Mostly present in stems and flowers, and, to a lower extent, in seedlings, hypocotyls, roots and the shoot apical meristem (SAM).

It localises to the nucleus. Its function is as follows. Transcription factor involved in inflorescence stems gravitropism, probably by regulating starch accumulation in amyloplasts of graviperceptive cells. Required for stem circumnutation movements. Regulates lateral organ morphogenesis and gravitropic responses. Acts cooperatively with IDD16 to control silique and branche orientation. Involved in the establishment of auxin gradients through the regulation of auxin biosynthesis and transport. This Arabidopsis thaliana (Mouse-ear cress) protein is Zinc finger protein SHOOT GRAVITROPISM 5.